An 89-amino-acid chain; its full sequence is Small ribosomal subunit protein uS15 (89 aa).

This sequence belongs to the universal ribosomal protein uS15 family. Part of the 30S ribosomal subunit. Forms a bridge to the 50S subunit in the 70S ribosome, contacting the 23S rRNA.

In terms of biological role, one of the primary rRNA binding proteins, it binds directly to 16S rRNA where it helps nucleate assembly of the platform of the 30S subunit by binding and bridging several RNA helices of the 16S rRNA. Functionally, forms an intersubunit bridge (bridge B4) with the 23S rRNA of the 50S subunit in the ribosome. This is Small ribosomal subunit protein uS15 from Nostoc sp. (strain PCC 7120 / SAG 25.82 / UTEX 2576).